We begin with the raw amino-acid sequence, 104 residues long: Small ribosomal subunit protein uS10 (104 aa).

It belongs to the universal ribosomal protein uS10 family. In terms of assembly, part of the 30S ribosomal subunit.

In terms of biological role, involved in the binding of tRNA to the ribosomes. The polypeptide is Small ribosomal subunit protein uS10 (Thermosynechococcus vestitus (strain NIES-2133 / IAM M-273 / BP-1)).